The primary structure comprises 374 residues: uncharacterized protein (374 aa).

The first 21 residues, 1–21, serve as a signal peptide directing secretion; it reads MSIISRVCIPCAVLLFAQLHA. One can recognise a Fibronectin type-III domain in the interval 22–102; the sequence is KELVHVSQLK…ASASAWTSLS (81 aa).

This is an uncharacterized protein from Treponema pallidum (strain Nichols).